Consider the following 396-residue polypeptide: KiSS-1 receptor (396 aa).

Topologically, residues 1–46 are extracellular; the sequence is MAAEATLGPNVSWWAPSNASGCPGCGVNASDGPGSAPRPLDAWLVP. Asn-10, Asn-18, and Asn-28 each carry an N-linked (GlcNAc...) asparagine glycan. The chain crosses the membrane as a helical span at residues 47–67; the sequence is LFFAALMLLGLVGNSLVIFVI. Residues 68–90 lie on the Cytoplasmic side of the membrane; sequence CRHKHMQTVTNFYIANLAATDVT. Residues 91-111 traverse the membrane as a helical segment; it reads FLLCCVPFTALLYPLPTWVLG. Residues 112 to 120 are Extracellular-facing; the sequence is DFMCKFVNY. The cysteines at positions 115 and 191 are disulfide-linked. Residues 121-138 traverse the membrane as a helical segment; it reads IQQVSVQATCATLTAMSV. The Cytoplasmic segment spans residues 139–159; it reads DRWYVTVFPLRALHRRTPRLA. A helical membrane pass occupies residues 160 to 180; the sequence is LTVSLSIWVGSAAVSAPVLAL. Topologically, residues 181 to 202 are extracellular; it reads HRLSPGPHTYCSEAFPSRALER. Residues 203-223 form a helical membrane-spanning segment; the sequence is AFALYNLLALYLLPLLATCAC. Residues 224–264 lie on the Cytoplasmic side of the membrane; that stretch reads YGAMLRHLGRAAVRPAPTDGALQGQLLAQRAGAVRTKVSRL. A helical membrane pass occupies residues 265 to 285; the sequence is VAAVVLLFAACWGPIQLFLVL. Residues 286–305 lie on the Extracellular side of the membrane; sequence QALGPSGAWHPRSYAAYALK. A helical transmembrane segment spans residues 306-326; sequence IWAHCMSYSNSALNPLLYAFL. The Cytoplasmic portion of the chain corresponds to 327–396; sequence GSHFRQAFCR…SVQDEHTAPL (70 aa). The segment at 346-396 is disordered; it reads RRPHASAHSDRAAPHSVPHSRAAHPVRVRTPEPGNPVRRSPSVQDEHTAPL.

It belongs to the G-protein coupled receptor 1 family. As to expression, highest expression levels in the cerebrum and cecum. Moderate expression in the ovary, colon and placenta. Low levels in the uterus, small intestine, and thymus. Expressed only moderately in the placenta. No expression in kidney tissues. Has a complex and abundant central nervous system expression pattern. Expressed in brain regions such as pons, midbrain, thalamus, hypothalamus, hippocampus, amygdala, cortex, frontal cortex, and striatum. No expression in the cerebellum. Persistent expression is detected in hypothalamus throughout postnatal development, with maximum expression levels at puberty in both male and female. Hypothalamic expression changed throughout the estrus cycle and is significantly increased after gonadectomy, a rise that is prevented by sex steroid replacement both in males and females.

The protein resides in the cell membrane. In terms of biological role, receptor for metastin, a C-terminally amidated peptide of KiSS1. KiSS1 is a metastasis suppressor protein. Activation of the receptor inhibits cell proliferation and cell migration, key characteristics of tumor metastasis. The receptor is essential for normal gonadotropin-released hormone physiology and for puberty. The hypothalamic KiSS1/KISS1R system is a pivotal factor in central regulation of the gonadotropic axis at puberty and in adulthood. Analysis of the transduction pathways activated by the receptor identifies coupling to phospholipase C and intracellular calcium release through pertussis toxin-insensitive G(q) proteins. The chain is KiSS-1 receptor (Kiss1r) from Rattus norvegicus (Rat).